A 538-amino-acid chain; its full sequence is D-alanyl-D-alanine carboxypeptidase (538 aa).

Residues 1–21 (MKQSSPEPLRPRRTGGRGGAR) form a disordered region. The N-terminal stretch at 1–49 (MKQSSPEPLRPRRTGGRGGARRAAALVTIPLLPMTLLGASPALADASGA) is a signal peptide. The active-site Acyl-ester intermediate is the serine 98. Catalysis depends on lysine 101, which acts as the Proton acceptor. An absent in class-A beta-lactamases region spans residues 146–319 (TLSAEDLDAM…KGDVGLGGVP (174 aa)). The active site involves serine 347. Lysine 459 contributes to the substrate binding site. A propeptide spans 516 to 538 (GARMMRGPVQGSGELECSWVQAC) (removed in mature form).

Belongs to the peptidase S13 family.

The protein resides in the secreted. It catalyses the reaction Preferential cleavage: (Ac)2-L-Lys-D-Ala-|-D-Ala. Also transpeptidation of peptidyl-alanyl moieties that are N-acyl substituents of D-alanine.. Its pathway is cell wall biogenesis; peptidoglycan biosynthesis. Its activity is regulated as follows. Inhibited by benzylpenicillin, cephaloridine, ampicillin and cetiofur. Removes C-terminal D-alanyl residues from sugar-peptide cell wall precursors. In Actinomadura sp. (strain R39), this protein is D-alanyl-D-alanine carboxypeptidase (dac).